Here is a 767-residue protein sequence, read N- to C-terminus: MEGVYSAEAVIDNGRFGTRTIRFETGRLARQATGSATAYLDDETMVLSATTVSKRPKEALDFFPLTVDVEERMYAAGRIPGSFFRREGRPSEDAILTCRLIDRPLRPSFQKGLRNEIQIVATVLALHPDHLYDVIAINAASMSTQLAGLPFSGPIGGVRVALVEGQWVAFPTHSELANATFDMVVAGRVLDNGDVAIMMVEAESTPHTLRLVAEGAIGPNEQTVAEGLEAAKPFIKVLCRAQQTVAEAAGKPPGEYPIFIDYQDDAYAAVEEAIHDELAAALTIADKQEREAELDRVKALVAEKLAEDFEGREKELAAAFRALTRKLVRERIVKDGVRIDGRGVKDIRSLTAEVNVIPRVHGSALFERGETQILGITTLNMLRMEQTIDTLNPERTKRYMHNYNFPPYSTGETGRVGAPKRREIGHGALAERALVPVLPSREEFPYAIRQVSEAIGSNGSTSMGSVCASTMSLMAAGVPLKDMVAGIAMGLIYEDGKYVTLTDILGAEDAYGDMDFKVAGTRDLITALQLDTKLDGIPAEVLASALQQARGARLAILDVMSEAINRPAEISPHAPRILTVKVPIDKIGEVIGPKGKMINSIQDETGAEITIEDDGTIYIGATDGPSAEAARDAINSIANPTMPEVGERYLGTVVKTTAFGAFVSLLPGKDGLLHISQIRKMHGGQRIENVEDVISIGEKIHVEVRDIDERGKLSLVPVEVIEAEAVAAPNGGESPNGAKKTDASGNGAKQPRRRRRTRSSSRSSENT.

Positions 509 and 515 each coordinate Mg(2+). In terms of domain architecture, KH spans P575–I634. In terms of domain architecture, S1 motif spans G646–V718. A disordered region spans residues A725–T767. Residues Q750 to S759 are compositionally biased toward basic residues.

This sequence belongs to the polyribonucleotide nucleotidyltransferase family. It depends on Mg(2+) as a cofactor.

The protein localises to the cytoplasm. It catalyses the reaction RNA(n+1) + phosphate = RNA(n) + a ribonucleoside 5'-diphosphate. In terms of biological role, involved in mRNA degradation. Catalyzes the phosphorolysis of single-stranded polyribonucleotides processively in the 3'- to 5'-direction. The sequence is that of Polyribonucleotide nucleotidyltransferase from Thermobifida fusca (strain YX).